A 179-amino-acid polypeptide reads, in one-letter code: Natural killer cells antigen CD94 (179 aa).

Residues 1–10 (MAVSRITRWR) lie on the Cytoplasmic side of the membrane. A helical; Signal-anchor for type II membrane protein membrane pass occupies residues 11 to 31 (LMSMFFGIKCLFLIVALGVLV). Topologically, residues 32–179 (KNSFTIQNIQ…NRFICKQLPT (148 aa)) are extracellular. 4 disulfide bridges follow: C58-C70, C61-C72, C89-C174, and C152-C166. A C-type lectin domain is found at 68 to 175 (HQCSCYFISK…CENKNRFICK (108 aa)). N-linked (GlcNAc...) asparagine glycosylation occurs at N93.

In terms of assembly, can form disulfide-bonded heterodimer with NKG2 family members KLRC1 and KLRC2. KLRD1-KLRC1 heterodimer interacts with peptide-bound MHC-E-B2M heterotrimeric complex. KLRD1 plays a prominent role in directly interacting with MHC-E. KLRD1-KLRC1 interacts with much higher affinity with peptide-bound MHC-E-B2M than KLRD1-KLRC2. Interacts with the adapter protein TYROBP/DAP12; this interaction is required for cell surface expression and cell activation.

It localises to the cell membrane. Functionally, immune receptor involved in self-nonself discrimination. In complex with KLRC1 or KLRC2 on cytotoxic and regulatory lymphocyte subsets, recognizes non-classical major histocompatibility (MHC) class Ib molecule MHC-E loaded with self-peptides derived from the signal sequence of classical MHC class Ia and non-classical MHC class Ib molecules. Enables cytotoxic cells to monitor the expression of MHC class I molecules in healthy cells and to tolerate self. Primarily functions as a ligand binding subunit as it lacks the capacity to signal. Its function is as follows. KLRD1-KLRC1 acts as an immune inhibitory receptor. Key inhibitory receptor on natural killer (NK) cells that regulates their activation and effector functions. Dominantly counteracts T cell receptor signaling on a subset of memory/effector CD8-positive T cells as part of an antigen-driven response to avoid autoimmunity. On intraepithelial CD8-positive gamma-delta regulatory T cells triggers TGFB1 secretion, which in turn limits the cytotoxic programming of intraepithelial CD8-positive alpha-beta T cells, distinguishing harmless from pathogenic antigens. In MHC-E-rich tumor microenvironment, acts as an immune inhibitory checkpoint and may contribute to progressive loss of effector functions of NK cells and tumor-specific T cells, a state known as cell exhaustion. Upon MHC-E-peptide binding, transmits intracellular signals through KLRC1 immunoreceptor tyrosine-based inhibition motifs (ITIMs) by recruiting INPP5D/SHIP-1 and INPPL1/SHIP-2 tyrosine phosphatases to ITIMs, and ultimately opposing signals transmitted by activating receptors through dephosphorylation of proximal signaling molecules. KLRD1-KLRC2 acts as an immune activating receptor. On cytotoxic lymphocyte subsets recognizes MHC-E loaded with signal sequence-derived peptides from non-classical MHC class Ib MHC-G molecules, likely playing a role in the generation and effector functions of adaptive NK cells and in maternal-fetal tolerance during pregnancy. Regulates the effector functions of terminally differentiated cytotoxic lymphocyte subsets, and in particular may play a role in adaptive NK cell response to viral infection. Upon MHC-E-peptide binding, transmits intracellular signals via the adapter protein TYROBP/DAP12, triggering the phosphorylation of proximal signaling molecules and cell activation. In Rattus norvegicus (Rat), this protein is Natural killer cells antigen CD94 (Klrd1).